We begin with the raw amino-acid sequence, 601 residues long: Uptake hydrogenase large subunit (601 aa).

Ni(2+) contacts are provided by Cys74, Cys77, Cys580, and Cys583.

The protein belongs to the [NiFe]/[NiFeSe] hydrogenase large subunit family. As to quaternary structure, heterodimer of a large and a small subunit. Requires Ni(2+) as cofactor.

The protein localises to the cell membrane. It carries out the reaction H2 + A = AH2. Its function is as follows. This enzyme recycles the H(2) produced by nitrogenase to increase the production of ATP and to protect nitrogenase against inhibition or damage by O(2) under carbon- or phosphate-limited conditions. In Azotobacter chroococcum mcd 1, this protein is Uptake hydrogenase large subunit (hupL).